A 208-amino-acid polypeptide reads, in one-letter code: Probable GTP-binding protein EngB (208 aa).

The region spanning 18–187 (KQFEICVIGR…FALMKKVVIE (170 aa)) is the EngB-type G domain. GTP-binding positions include 26–33 (GRSNVGKS), 52–56 (GRTQL), 69–72 (DLPG), 135–138 (NKVD), and 166–168 (VSA). Mg(2+) is bound by residues Ser-33 and Thr-54.

This sequence belongs to the TRAFAC class TrmE-Era-EngA-EngB-Septin-like GTPase superfamily. EngB GTPase family. Mg(2+) is required as a cofactor.

Its function is as follows. Necessary for normal cell division and for the maintenance of normal septation. In Ureaplasma urealyticum serovar 10 (strain ATCC 33699 / Western), this protein is Probable GTP-binding protein EngB.